The sequence spans 271 residues: Regulatory protein RecX (271 aa).

The protein belongs to the RecX family.

It is found in the cytoplasm. Its function is as follows. Modulates RecA activity. This is Regulatory protein RecX from Lactobacillus gasseri (strain ATCC 33323 / DSM 20243 / BCRC 14619 / CIP 102991 / JCM 1131 / KCTC 3163 / NCIMB 11718 / NCTC 13722 / AM63).